Reading from the N-terminus, the 66-residue chain is Small ribosomal subunit protein bS21B (66 aa).

The disordered stretch occupies residues 38–66 (YVKPTQKRKIAKKAAISKAKKEARRSYSY).

The protein belongs to the bacterial ribosomal protein bS21 family.

In Francisella tularensis subsp. tularensis (strain SCHU S4 / Schu 4), this protein is Small ribosomal subunit protein bS21B.